A 946-amino-acid chain; its full sequence is Sorting nexin-14 (946 aa).

2 consecutive transmembrane segments (helical) span residues 24 to 44 (ICRQ…ASLL) and 49 to 69 (IHIL…YCSL). Positions 130 to 304 (SSKVDASLSE…LLIIFIDDSP (175 aa)) constitute a PXA domain. An RGS domain is found at 336–468 (ELKQIREQQD…CHSDEYFRQL (133 aa)). At S548 the chain carries Phosphoserine. The PX domain occupies 570–690 (PYVDFFEDPS…DFLSPNGGET (121 aa)).

It belongs to the sorting nexin family. Widely expressed both in fetal and adult tissues.

The protein resides in the lysosome membrane. It is found in the late endosome membrane. It localises to the cell projection. The protein localises to the dendrite. Plays a role in maintaining normal neuronal excitability and synaptic transmission. May be involved in several stages of intracellular trafficking. Required for autophagosome clearance, possibly by mediating the fusion of lysosomes with autophagosomes. Binds phosphatidylinositol 3,5-bisphosphate (PtdIns(3,5)P2), a key component of late endosomes/lysosomes. Does not bind phosphatidylinositol 3-phosphate (PtdIns(3P)). The polypeptide is Sorting nexin-14 (SNX14) (Homo sapiens (Human)).